Here is a 582-residue protein sequence, read N- to C-terminus: Putative G-protein coupled receptor B0244.10 (582 aa).

The next 4 membrane-spanning stretches (helical) occupy residues 25 to 45 (LYII…PLGL), 70 to 90 (ITFS…GFAV), 120 to 140 (WTFF…GLVI), and 159 to 179 (LLVQ…VFLT). The N-linked (GlcNAc...) asparagine glycan is linked to asparagine 190. The chain crosses the membrane as a helical span at residues 199–218 (LTLGKWFIALYRFLFQMTNI). Asparagine 221 and asparagine 237 each carry an N-linked (GlcNAc...) asparagine glycan. 5 consecutive transmembrane segments (helical) span residues 253-273 (SLMI…AVLV), 296-316 (YIFV…IIII), 329-349 (TFAF…SLLG), 377-397 (IYII…PFGL), and 421-441 (WLLF…LLFV). Residue asparagine 457 is glycosylated (N-linked (GlcNAc...) asparagine). The next 2 membrane-spanning stretches (helical) occupy residues 475–495 (TILV…AAFG) and 513–533 (LIFP…TFLL). The N-linked (GlcNAc...) asparagine glycan is linked to asparagine 538.

Belongs to the G-protein coupled receptor 1 family. B0244 subfamily.

The protein localises to the cell membrane. The protein is Putative G-protein coupled receptor B0244.10 of Caenorhabditis elegans.